The following is a 54-amino-acid chain: Large ribosomal subunit protein bL33B (54 aa).

This sequence belongs to the bacterial ribosomal protein bL33 family.

This chain is Large ribosomal subunit protein bL33B, found in Mycolicibacterium smegmatis (strain ATCC 700084 / mc(2)155) (Mycobacterium smegmatis).